The sequence spans 169 residues: Small ribosomal subunit protein uS5 (169 aa).

In terms of domain architecture, S5 DRBM spans 13-76 (LVEKLVSVRR…EKARRNMKDV (64 aa)).

It belongs to the universal ribosomal protein uS5 family. Part of the 30S ribosomal subunit. Contacts proteins S4 and S8.

Functionally, with S4 and S12 plays an important role in translational accuracy. In terms of biological role, located at the back of the 30S subunit body where it stabilizes the conformation of the head with respect to the body. The sequence is that of Small ribosomal subunit protein uS5 from Hydrogenovibrio crunogenus (strain DSM 25203 / XCL-2) (Thiomicrospira crunogena).